The primary structure comprises 237 residues: UPF0758 protein Aave_3773 (237 aa).

One can recognise an MPN domain in the interval leucine 115–isoleucine 237. Zn(2+)-binding residues include histidine 186, histidine 188, and aspartate 199. Residues histidine 186–aspartate 199 carry the JAMM motif motif.

It belongs to the UPF0758 family.

This Paracidovorax citrulli (strain AAC00-1) (Acidovorax citrulli) protein is UPF0758 protein Aave_3773.